Reading from the N-terminus, the 486-residue chain is Malonate-semialdehyde dehydrogenase 1 (486 aa).

Phe-154, Lys-178, Glu-181, Arg-182, and Ser-231 together coordinate NAD(+). The active-site Nucleophile is the Cys-286. Glu-386 contacts NAD(+).

This sequence belongs to the aldehyde dehydrogenase family. IolA subfamily. In terms of assembly, homotetramer.

The enzyme catalyses 3-oxopropanoate + NAD(+) + CoA + H2O = hydrogencarbonate + acetyl-CoA + NADH + H(+). It carries out the reaction 2-methyl-3-oxopropanoate + NAD(+) + CoA + H2O = propanoyl-CoA + hydrogencarbonate + NADH + H(+). The protein operates within polyol metabolism; myo-inositol degradation into acetyl-CoA; acetyl-CoA from myo-inositol: step 7/7. Catalyzes the oxidation of malonate semialdehyde (MSA) and methylmalonate semialdehyde (MMSA) into acetyl-CoA and propanoyl-CoA, respectively. Is involved in a myo-inositol catabolic pathway. Bicarbonate, and not CO2, is the end-product of the enzymatic reaction. This is Malonate-semialdehyde dehydrogenase 1 from Bacillus thuringiensis (strain Al Hakam).